A 472-amino-acid chain; its full sequence is MGCDRNCGLIAGAVIGAVLAVFGGILMPVGDMLVEKTIKKEVVLEEGTIAFKNWVKTGTTVYRQFWIFDVQNPDEVAVNSSKIKVKQRGPYTYRVRYLAKENITQDPVDSTVSFVQPNGAIFEPSLSVGTENDTFTILNLAVAAAPHIYTNSFVQVVLNSLIKKSKSSMFQTRTLRELLWGYKDPFLSLVPYPIPTTVGVFYPYNDTADGVYKVFNGKDDINKVAIIDSYKGKRNLSYWESYCDMINGTDAASFPPFVEKSRVLRFFSSDICRSIYAVFGSDIELKGIPVYRFILPAKAFASPVQNPDNHCFCTEKVISNNCTSYGVLDISKCKQGRPVYISLPHFLHASPDISEPIEGLNPNEEEHRTYLDVEPITGFTLQFAKRLQVNILVKPARKIEALKNLKRNYIVPILWLNETGTIGDEKAEMFRNQVTGKVKLLGLVEMVLLGLGVVMFVAFMISYCACRSKNRK.

The Cytoplasmic segment spans residues 1 to 7 (MGCDRNC). 2 S-palmitoyl cysteine lipidation sites follow: Cys-3 and Cys-7. A helical transmembrane segment spans residues 8–29 (GLIAGAVIGAVLAVFGGILMPV). Residues 30 to 439 (GDMLVEKTIK…FRNQVTGKVK (410 aa)) lie on the Extracellular side of the membrane. Residues Asn-79, Asn-102, Asn-132, Asn-205, Asn-235, Asn-247, Asn-321, and Asn-417 are each glycosylated (N-linked (GlcNAc...) asparagine). Positions 93-120 (YRVRYLAKENITQDPVDSTVSFVQPNGA) are required for interaction with thrombospondins, THBS1 and THBS2. Disulfide bonds link Cys-243/Cys-311, Cys-272/Cys-333, and Cys-313/Cys-322. Residues 440–461 (LLGLVEMVLLGLGVVMFVAFMI) form a helical membrane-spanning segment. The interaction with PTK2, PXN and LYN stretch occupies residues 460-472 (MISYCACRSKNRK). Residues 462–472 (SYCACRSKNRK) lie on the Cytoplasmic side of the membrane. Residues Cys-464 and Cys-466 are each lipidated (S-palmitoyl cysteine). Residues Lys-469 and Lys-472 each participate in a glycyl lysine isopeptide (Lys-Gly) (interchain with G-Cter in ubiquitin) cross-link.

Belongs to the CD36 family. As to quaternary structure, interacts with THBS1 and THBS2; the interactions mediate the THBS antiangiogenic activity. Upon interaction with a ligand, such as oxidized low-density lipoprotein (oxLDL) or amyloid-beta 42, rapidly forms a complex with TLR4 and TLR6; the complex is internalized and triggers an inflammatory signal. Through its C-terminus, interacts with PTK2, PXN and LYN, but not with SRC. LYN kinase activity is required for facilitating TLR4:TLR6 heterodimerization and signal initiation. Upon interaction with ligands such as diacylated lipopeptides, interacts with the TLR2:TLR6 heterodimer. Interacts with CD9, CD81, FCER1G, ITGB2 and/or ITGB2; forming a membrane heteromeric complex required for the internalization of CD36 and its ligands. Interacts (when palmitoylated) with ARF6; this interaction mediates CD36 transport to the plasma membrane. Palmitoylated by ZDHHC5. Palmitoylation is required for proper localization at the plasma membrane. Post-translationally, ubiquitinated at Lys-469 and Lys-472. Ubiquitination is induced by fatty acids such as oleic acid and leads to degradation by the proteasome. Ubiquitination and degradation are inhibited by insulin which blocks the effect of fatty acids.

The protein localises to the cell membrane. It localises to the membrane raft. It is found in the golgi apparatus. The protein resides in the apical cell membrane. The catalysed reaction is butanoate(out) = butanoate(in). The enzyme catalyses (9Z)-octadecenoate(out) = (9Z)-octadecenoate(in). It catalyses the reaction (9Z,12Z)-octadecadienoate(out) = (9Z,12Z)-octadecadienoate(in). It carries out the reaction tetradecanoate(out) = tetradecanoate(in). The catalysed reaction is hexadecanoate(out) = hexadecanoate(in). The enzyme catalyses tetracosanoate(out) = tetracosanoate(in). Multifunctional glycoprotein that acts as a receptor for a broad range of ligands. Ligands can be of proteinaceous nature like thrombospondin, fibronectin, collagen or amyloid-beta as well as of lipidic nature such as oxidized low-density lipoprotein (oxLDL), anionic phospholipids, long-chain fatty acids and bacterial diacylated lipopeptides. They are generally multivalent and can therefore engage multiple receptors simultaneously, the resulting formation of CD36 clusters initiates signal transduction and internalization of receptor-ligand complexes. The dependency on coreceptor signaling is strongly ligand specific. Cellular responses to these ligands are involved in angiogenesis, inflammatory response, fatty acid metabolism, taste and dietary fat processing in the intestine. Binds long-chain fatty acids and facilitates their transport into cells, thus participating in muscle lipid utilization, adipose energy storage, and gut fat absorption. Mechanistically, binding of fatty acids activates downstream kinase LYN, which phosphorylates the palmitoyltransferase ZDHHC5 and inactivates it, resulting in the subsequent depalmitoylation of CD36 and caveolar endocytosis. In the small intestine, plays a role in proximal absorption of dietary fatty acid and cholesterol for optimal chylomicron formation, possibly through the activation of MAPK1/3 (ERK1/2) signaling pathway. Involved in oral fat perception and preferences. Detection into the tongue of long-chain fatty acids leads to a rapid and sustained rise in flux and protein content of pancreatobiliary secretions. In taste receptor cells, mediates the induction of an increase in intracellular calcium levels by long-chain fatty acids, leading to the activation of the gustatory neurons in the nucleus of the solitary tract. Important factor in both ventromedial hypothalamus neuronal sensing of long-chain fatty acid and the regulation of energy and glucose homeostasis. Receptor for thrombospondins, THBS1 and THBS2, mediating their antiangiogenic effects. As a coreceptor for TLR4:TLR6 heterodimer, promotes inflammation in monocytes/macrophages. Upon ligand binding, such as oxLDL or amyloid-beta 42, interacts with the heterodimer TLR4:TLR6, the complex is internalized and triggers inflammatory response, leading to NF-kappa-B-dependent production of CXCL1, CXCL2 and CCL9 cytokines, via MYD88 signaling pathway, and CCL5 cytokine, via TICAM1 signaling pathway, as well as IL1B secretion, through the priming and activation of the NLRP3 inflammasome. Selective and nonredundant sensor of microbial diacylated lipopeptide that signal via TLR2:TLR6 heterodimer, this cluster triggers signaling from the cell surface, leading to the NF-kappa-B-dependent production of TNF, via MYD88 signaling pathway and subsequently is targeted to the Golgi in a lipid-raft dependent pathway. The sequence is that of Platelet glycoprotein 4 (CD36) from Mesocricetus auratus (Golden hamster).